Here is a 475-residue protein sequence, read N- to C-terminus: Aspartyl/glutamyl-tRNA(Asn/Gln) amidotransferase subunit B (475 aa).

Belongs to the GatB/GatE family. GatB subfamily. As to quaternary structure, heterotrimer of A, B and C subunits.

The enzyme catalyses L-glutamyl-tRNA(Gln) + L-glutamine + ATP + H2O = L-glutaminyl-tRNA(Gln) + L-glutamate + ADP + phosphate + H(+). The catalysed reaction is L-aspartyl-tRNA(Asn) + L-glutamine + ATP + H2O = L-asparaginyl-tRNA(Asn) + L-glutamate + ADP + phosphate + 2 H(+). Allows the formation of correctly charged Asn-tRNA(Asn) or Gln-tRNA(Gln) through the transamidation of misacylated Asp-tRNA(Asn) or Glu-tRNA(Gln) in organisms which lack either or both of asparaginyl-tRNA or glutaminyl-tRNA synthetases. The reaction takes place in the presence of glutamine and ATP through an activated phospho-Asp-tRNA(Asn) or phospho-Glu-tRNA(Gln). The protein is Aspartyl/glutamyl-tRNA(Asn/Gln) amidotransferase subunit B of Bacillus cereus (strain B4264).